A 144-amino-acid chain; its full sequence is Probable disulfide formation protein (144 aa).

A helical membrane pass occupies residues 10–29; that stretch reads WNLLLLTWLVALISTLSALF. An intrachain disulfide couples cysteine 39 to cysteine 42. 2 consecutive transmembrane segments (helical) span residues 44 to 63 and 70 to 87; these read FQRA…CYRS and YALP…VHTL. Cysteine 100 and cysteine 107 are oxidised to a cystine. A helical membrane pass occupies residues 116-138; that stretch reads GVVPLPALALFAFIIIAILLIII.

It belongs to the DsbB family. BdbC subfamily.

It localises to the cell inner membrane. Required for disulfide bond formation in some proteins. The protein is Probable disulfide formation protein of Metapseudomonas resinovorans (Pseudomonas resinovorans).